A 1148-amino-acid polypeptide reads, in one-letter code: Autophagy-related protein 11 (1148 aa).

The AIM (Atg8-family-interacting motif) motif lies at 567–570; sequence FDDI. The span at 699-710 shows a compositional bias: basic and acidic residues; sequence KAEASSDVEGNK. Disordered regions lie at residues 699 to 727, 754 to 777, and 784 to 803; these read KAEA…CVSN, PLDS…EAGE, and NSST…ATGR. 2 stretches are compositionally biased toward polar residues: residues 754-767 and 784-793; these read PLDS…QNNE and NSSTAESPQK. Coiled-coil stretches lie at residues 816 to 868 and 956 to 996; these read ELRN…HLEN and DKVS…VKTL. Phosphothreonine is present on Thr851. The AIM (Atg8-family-interacting motif) signature appears at 1130–1133; the sequence is YFIV.

This sequence belongs to the ATG11 family. As to quaternary structure, homodimer. Interacts with ATG8E, ATG13A and ATG101. Binds to ATG8E on autophagic vesicles.

It localises to the cytoplasmic vesicle. It is found in the autophagosome. Functionally, accessory protein involved in autophagy. Acts as a scaffold protein of the ATG1-ATG13 complex for faithful delivery of autophagic vesicles to the vacuole. Involved in the stress-induced phosphorylation of ATG1A for turnover of ATG1-ATG13 complex and proper ATG1-ATG13 complex assembly or activity. Required for selective mitophagy. Required for senescence-induced breakdown of mitochondria-resident proteins and mitochondrial vesicles. Seems not essential for ATG8-mediated autophagy. The polypeptide is Autophagy-related protein 11 (Arabidopsis thaliana (Mouse-ear cress)).